The following is a 165-amino-acid chain: GPI-anchored protein LORELEI (165 aa).

A signal peptide spans 1–20 (MELILLFFFLMALLVSLSSS). The segment at 82 to 93 (PYVSQINDMNSD) is required for its function in pollen tube reception. Asn-137 is a glycosylation site (N-linked (GlcNAc...) asparagine). Residue Ser-139 is the site of GPI-anchor amidated serine attachment. Residues 140-165 (TADSTPRFISLLISAATAVFALLVLT) constitute a propeptide, removed in mature form.

Interacts with FER. In terms of tissue distribution, expressed in leaves, buds, flowers and stems. Highest expression in the synergid cells of the female gametophyte.

The protein localises to the cell membrane. Female gametophyte-specific component of the signaling pathway required for fertilization. Required for reception of the pollen tube by the female gametophyte. Acts specifically at the synergid cell surface for pollen tube reception. Plays a role in double fertilization and early seed development. Component of the FER-regulated Rho GTPase signaling complex. Acts as a chaperone and coreceptor for FER. Required for localization of FER to the plasma membrane. This chain is GPI-anchored protein LORELEI (LRE), found in Arabidopsis thaliana (Mouse-ear cress).